We begin with the raw amino-acid sequence, 122 residues long: Large ribosomal subunit protein uL14 (122 aa).

The protein belongs to the universal ribosomal protein uL14 family. As to quaternary structure, part of the 50S ribosomal subunit. Forms a cluster with proteins L3 and L19. In the 70S ribosome, L14 and L19 interact and together make contacts with the 16S rRNA in bridges B5 and B8.

Binds to 23S rRNA. Forms part of two intersubunit bridges in the 70S ribosome. This is Large ribosomal subunit protein uL14 from Orientia tsutsugamushi (strain Ikeda) (Rickettsia tsutsugamushi).